A 540-amino-acid chain; its full sequence is Chaperonin GroEL (540 aa).

Residues 30-33 (TLGP), Lys-51, 87-91 (DGTTT), Gly-415, 479-481 (NAA), and Asp-495 each bind ATP.

This sequence belongs to the chaperonin (HSP60) family. In terms of assembly, forms a cylinder of 14 subunits composed of two heptameric rings stacked back-to-back. Interacts with the co-chaperonin GroES.

It localises to the cytoplasm. The catalysed reaction is ATP + H2O + a folded polypeptide = ADP + phosphate + an unfolded polypeptide.. In terms of biological role, together with its co-chaperonin GroES, plays an essential role in assisting protein folding. The GroEL-GroES system forms a nano-cage that allows encapsulation of the non-native substrate proteins and provides a physical environment optimized to promote and accelerate protein folding. The sequence is that of Chaperonin GroEL from Raoultella planticola (Klebsiella planticola).